The following is a 414-amino-acid chain: Esterase FrsA (414 aa).

This sequence belongs to the FrsA family.

The catalysed reaction is a carboxylic ester + H2O = an alcohol + a carboxylate + H(+). Catalyzes the hydrolysis of esters. This is Esterase FrsA from Escherichia fergusonii (strain ATCC 35469 / DSM 13698 / CCUG 18766 / IAM 14443 / JCM 21226 / LMG 7866 / NBRC 102419 / NCTC 12128 / CDC 0568-73).